Consider the following 592-residue polypeptide: UvrABC system protein C (592 aa).

Residues 14–91 form the GIY-YIG domain; it reads KKPGCYLWKN…IKKHKPRYNI (78 aa). In terms of domain architecture, UVR spans 197–232; the sequence is DQVLKDLKEKESIASEKFDFEQAKKYLDLQKAINLI.

This sequence belongs to the UvrC family. As to quaternary structure, interacts with UvrB in an incision complex.

Its subcellular location is the cytoplasm. Functionally, the UvrABC repair system catalyzes the recognition and processing of DNA lesions. UvrC both incises the 5' and 3' sides of the lesion. The N-terminal half is responsible for the 3' incision and the C-terminal half is responsible for the 5' incision. In Mycoplasmoides gallisepticum (strain R(low / passage 15 / clone 2)) (Mycoplasma gallisepticum), this protein is UvrABC system protein C.